A 324-amino-acid chain; its full sequence is Acetyl-coenzyme A carboxylase carboxyl transferase subunit alpha (324 aa).

Residues 44-298 form the CoA carboxyltransferase C-terminal domain; that stretch reads QLEAKATQLR…KTAIVKSLDD (255 aa).

Belongs to the AccA family. In terms of assembly, acetyl-CoA carboxylase is a heterohexamer composed of biotin carboxyl carrier protein (AccB), biotin carboxylase (AccC) and two subunits each of ACCase subunit alpha (AccA) and ACCase subunit beta (AccD).

The protein localises to the cytoplasm. The enzyme catalyses N(6)-carboxybiotinyl-L-lysyl-[protein] + acetyl-CoA = N(6)-biotinyl-L-lysyl-[protein] + malonyl-CoA. It functions in the pathway lipid metabolism; malonyl-CoA biosynthesis; malonyl-CoA from acetyl-CoA: step 1/1. Its function is as follows. Component of the acetyl coenzyme A carboxylase (ACC) complex. First, biotin carboxylase catalyzes the carboxylation of biotin on its carrier protein (BCCP) and then the CO(2) group is transferred by the carboxyltransferase to acetyl-CoA to form malonyl-CoA. This is Acetyl-coenzyme A carboxylase carboxyl transferase subunit alpha from Trichodesmium erythraeum (strain IMS101).